The following is a 900-amino-acid chain: UPF0182 protein Ppro_3567 (900 aa).

Helical transmembrane passes span 15-35 (FFPL…LLNL), 60-80 (GAGL…LHVA), 112-132 (VSML…AMKW), 174-194 (FIIL…GGIL), 210-230 (LAVL…LDSF), 257-277 (VLTF…WKGV), and 282-302 (LLAP…YPGV).

This sequence belongs to the UPF0182 family.

The protein localises to the cell membrane. The polypeptide is UPF0182 protein Ppro_3567 (Pelobacter propionicus (strain DSM 2379 / NBRC 103807 / OttBd1)).